Here is a 483-residue protein sequence, read N- to C-terminus: ATP-dependent RNA helicase DDX25 (483 aa).

The short motif at 61–74 (LAANSLLNKLIRQS) is the Nuclear export signal element. The Q motif motif lies at 97 to 125 (KTFEELRLKEELLKGIYAMGFNRPSKIQE). A Nuclear localization signal motif is present at residues 100–114 (EELRLKEELLKGIYA). The Helicase ATP-binding domain maps to 130–300 (MMLAHPPQNL…ERIIPDPNVI (171 aa)). 143-150 (SQSGTGKT) serves as a coordination point for ATP. Positions 247–250 (DEAD) match the DEAD box motif. A Helicase C-terminal domain is found at 311 to 478 (NIRQYYVLCG…QLDPEDMDEI (168 aa)).

Belongs to the DEAD box helicase family. Phosphorylated on threonine residues. The phosphorylated form is found in the cytoplasm but not in the nucleus.

It is found in the cytoplasm. Its subcellular location is the nucleus. It catalyses the reaction ATP + H2O = ADP + phosphate + H(+). Its function is as follows. ATP-dependent RNA helicase. Required for mRNA export and translation regulation during spermatid development. This is ATP-dependent RNA helicase DDX25 (DDX25) from Bos taurus (Bovine).